Reading from the N-terminus, the 120-residue chain is Large ribosomal subunit protein bL12 (120 aa).

This sequence belongs to the bacterial ribosomal protein bL12 family. In terms of assembly, homodimer. Part of the ribosomal stalk of the 50S ribosomal subunit. Forms a multimeric L10(L12)X complex, where L10 forms an elongated spine to which 2 to 4 L12 dimers bind in a sequential fashion. Binds GTP-bound translation factors.

Functionally, forms part of the ribosomal stalk which helps the ribosome interact with GTP-bound translation factors. Is thus essential for accurate translation. This is Large ribosomal subunit protein bL12 from Haemophilus ducreyi (strain 35000HP / ATCC 700724).